Consider the following 115-residue polypeptide: Protamine-2 (115 aa).

A disordered region spans residues 1 to 115 (MVRCHVKSPT…RRRRRCGRQL (115 aa)). Residue Ser-8 is modified to Phosphoserine. The segment covering 24 to 38 (ETEHPDQARELRPED) has biased composition (basic and acidic residues). Composition is skewed to basic residues over residues 44–79 (RTHRGRYHYRHRSHTRRRPYRRRRRRACRHRRRRRG) and 102–115 (RRMRRRRRRCGRQL).

This sequence belongs to the protamine P2 family. Interacts with TDRP. In terms of processing, proteolytic processing into mature chains is required for histone eviction during spermatogenesis. Transition proteins (TNP1 and TNP2) are required for processing. As to expression, testis.

It localises to the nucleus. The protein resides in the chromosome. Protamines substitute for histones in the chromatin of sperm during the haploid phase of spermatogenesis. They compact sperm DNA into a highly condensed, stable and inactive complex. In Bos taurus (Bovine), this protein is Protamine-2 (PRM2).